Consider the following 35-residue polypeptide: Natriuretic peptide TNPa (35 aa).

Cys9 and Cys25 are disulfide-bonded.

In terms of tissue distribution, expressed by the venom gland.

It is found in the secreted. Functionally, snake venom natriuretic peptide that exhibits vasoactive and probable hypotensive activity. Is only weakly active on natriuretic peptide receptor-C (NPR3). Stimulates cGMP production through the natriuretic peptide receptor 1 (NPR1) with moderate potencies for the rat NPR1 (EC(50)=2020 nM), and very weak potencies over human NPR1 (15% activation at 10 uM). In vivo, does not impact systolic and diastolic blood pressure, as well as heart rate, when intravenously injected in conscious rabbits. Does not affect the bradycardia due to cardiac afferent stimulation (Bezold-Jarisch reflex). This Oxyuranus microlepidotus (Inland taipan) protein is Natriuretic peptide TNPa.